A 232-amino-acid chain; its full sequence is Platelet-activating factor acetylhydrolase IB subunit alpha1 (232 aa).

Residues 1-20 (MSGEGENPASKPTPVQDVQG) are disordered. Position 2 is an N-acetylserine (S2). At S2 the chain carries Phosphoserine. Residues S48, D193, and H196 contribute to the active site.

This sequence belongs to the 'GDSL' lipolytic enzyme family. Platelet-activating factor acetylhydrolase IB beta/gamma subunits subfamily. In terms of assembly, forms a catalytic dimer which is either homodimer (alpha1/alpha1 homodimer) or heterodimer with PAFAH1B2 (alpha1/alpha2 heterodimer). Component of the cytosolic (PAF-AH (I)) heterotetrameric enzyme, which is composed of PAFAH1B1 (beta), PAFAH1B2 (alpha2) and PAFAH1B3 (alpha1) subunits. The catalytic activity of the enzyme resides in the alpha1 (PAFAH1B3) and alpha2 (PAFAH1B2) subunits, whereas the beta subunit (PAFAH1B1) has regulatory activity. Trimer formation is not essential for the catalytic activity. Interacts with VLDLR; this interaction may modulate the Reelin pathway.

It is found in the cytoplasm. It carries out the reaction a 1-O-alkyl-2-acetyl-sn-glycero-3-phosphocholine + H2O = a 1-O-alkyl-sn-glycero-3-phosphocholine + acetate + H(+). It catalyses the reaction 1-O-hexadecyl-2-acetyl-sn-glycero-3-phosphocholine + H2O = 1-O-hexadecyl-sn-glycero-3-phosphocholine + acetate + H(+). The enzyme catalyses 1-O-hexadecyl-2-acetyl-sn-glycero-3-phosphate + H2O = 1-O-hexadecyl-sn-glycero-3-phosphate + acetate + H(+). With respect to regulation, beta subunit (PAFAH1B1) inhibits the acetylhydrolase activity of the alpha1/alpha1 catalytic homodimer. Its function is as follows. Alpha1 catalytic subunit of the cytosolic type I platelet-activating factor (PAF) acetylhydrolase (PAF-AH (I)) heterotetrameric enzyme that catalyzes the hydrolyze of the acetyl group at the sn-2 position of PAF and its analogs and modulates the action of PAF. The activity and substrate specificity of PAF-AH (I) are affected by its subunit composition. Both alpha1/alpha1 homodimer (PAFAH1B3/PAFAH1B3 homodimer) and alpha1/alpha2 heterodimer(PAFAH1B3/PAFAH1B2 heterodimer) hydrolyze 1-O-alkyl-2-acetyl-sn-glycero-3-phosphoric acid (AAGPA) more efficiently than PAF, but they have little hydrolytic activity towards 1-O-alkyl-2-acetyl-sn-glycero-3-phosphorylethanolamine (AAGPE). Plays an important role during the development of brain. The protein is Platelet-activating factor acetylhydrolase IB subunit alpha1 of Mus musculus (Mouse).